A 189-amino-acid polypeptide reads, in one-letter code: Peptidyl-tRNA hydrolase (189 aa).

TRNA is bound at residue Tyr-14. Residue His-19 is the Proton acceptor of the active site. Positions 64, 66, and 112 each coordinate tRNA.

The protein belongs to the PTH family. Monomer.

The protein localises to the cytoplasm. The enzyme catalyses an N-acyl-L-alpha-aminoacyl-tRNA + H2O = an N-acyl-L-amino acid + a tRNA + H(+). Functionally, hydrolyzes ribosome-free peptidyl-tRNAs (with 1 or more amino acids incorporated), which drop off the ribosome during protein synthesis, or as a result of ribosome stalling. Catalyzes the release of premature peptidyl moieties from peptidyl-tRNA molecules trapped in stalled 50S ribosomal subunits, and thus maintains levels of free tRNAs and 50S ribosomes. In Clostridium botulinum (strain ATCC 19397 / Type A), this protein is Peptidyl-tRNA hydrolase.